A 401-amino-acid chain; its full sequence is MEETRRRFVISSVLSVSLIYLCLSTCHVSAFDFGRRQLRFNTDGRFKILQVSDMHYGFGKETQCSDVSPAEFPYCSDLNTTSFLQRTIASEKPDLIVFSGDNVYGLCETSDVAKSMDMAFAPAIESGIPWVAILGNHDQESDMTRETMMKYIMKLPNSLSQVNPPDAWLYQIDGFGNYNLQIEGPFGSPLFFKSILNLYLLDGGSYTKLDGFGYKYDWVKTSQQNWYEHTSKWLEMEHKRWPFPQNSTAPGLVYLHIPMPEFALFNKSTEMTGVRQESTCSPPINSGFFTKLVERGEVKGVFSGHDHVNDFCAELHGINLCYAGGAGYHGYGQVGWARRVRVVEAQLEKTMYGRWGAVDTIKTWKRLDDKNHSLIDTQLLWTKNTTLEPNFGFSCSTIPQH.

Residues 1–30 form the signal peptide; the sequence is MEETRRRFVISSVLSVSLIYLCLSTCHVSA. Asparagine 79 carries N-linked (GlcNAc...) asparagine glycosylation. Substrate is bound at residue asparagine 197. Zn(2+) is bound at residue asparagine 197. Asparagine 246 is a glycosylation site (N-linked (GlcNAc...) asparagine). Histidine 256 serves as a coordination point for Zn(2+). Asparagine 266 carries an N-linked (GlcNAc...) asparagine glycan. Histidine 305 is a Zn(2+) binding site. Substrate is bound at residue 305 to 307; it reads HDH. Histidine 307 is a Fe cation binding site. Asparagine 371 and asparagine 384 each carry an N-linked (GlcNAc...) asparagine glycan.

The protein belongs to the metallophosphoesterase superfamily. Purple acid phosphatase family. In terms of assembly, homodimer. Fe cation is required as a cofactor. It depends on Zn(2+) as a cofactor. In terms of tissue distribution, specifically expressed in flowers.

It localises to the secreted. The sequence is that of Probable inactive purple acid phosphatase 14 (PAP14) from Arabidopsis thaliana (Mouse-ear cress).